A 474-amino-acid polypeptide reads, in one-letter code: Cysteine--tRNA ligase (474 aa).

A Zn(2+)-binding site is contributed by cysteine 34. The 'HIGH' region signature appears at 36 to 46; it reads PTVYDYAHIGN. The Zn(2+) site is built by cysteine 219, histidine 244, and glutamate 248. The 'KMSKS' region motif lies at 276–280; it reads KMSKS. ATP is bound at residue lysine 279.

It belongs to the class-I aminoacyl-tRNA synthetase family. As to quaternary structure, monomer. Zn(2+) serves as cofactor.

Its subcellular location is the cytoplasm. It catalyses the reaction tRNA(Cys) + L-cysteine + ATP = L-cysteinyl-tRNA(Cys) + AMP + diphosphate. In Chlamydia pneumoniae (Chlamydophila pneumoniae), this protein is Cysteine--tRNA ligase (cysS).